We begin with the raw amino-acid sequence, 107 residues long: Multidrug resistance protein mmr (107 aa).

Helical transmembrane passes span 2 to 19 (IYLY…ATSL), 29 to 51 (LWPT…LSIS), 58 to 80 (VAYA…LFLG), and 84 to 106 (SVMK…LAGA).

This sequence belongs to the drug/metabolite transporter (DMT) superfamily. Small multidrug resistance (SMR) (TC 2.A.7.1) family. Mmr subfamily.

It is found in the cell membrane. Its function is as follows. Multidrug efflux pump. Confers resistance to tetraphenylphosphonium (TPP), erythromycin, ethidium bromide, acriflavine, safranin O and pyronin Y. This is Multidrug resistance protein mmr (mmr) from Mycobacterium bovis (strain ATCC BAA-935 / AF2122/97).